A 155-amino-acid chain; its full sequence is UPF0178 protein ACIAD2644 (155 aa).

The segment at 120 to 155 (GAGVQTGGPPPISERDKREFSSALDQTILKQKRKTA) is disordered.

It belongs to the UPF0178 family.

The chain is UPF0178 protein ACIAD2644 from Acinetobacter baylyi (strain ATCC 33305 / BD413 / ADP1).